A 327-amino-acid chain; its full sequence is Apoptosis facilitator Bcl-2-like protein 14 (327 aa).

S44 is subject to Phosphoserine. The BH3 motif lies at 212–226 (IVELLKYSGDQLERK). The BH2 motif lies at 308–315 (WIQQHGGW).

The protein belongs to the Bcl-2 family. Post-translationally, phosphorylated by MELK, leading to inhibit its pro-apoptotic function. Isoform 1 is widely expressed. Isoform 2 is testis-specific.

The protein resides in the cytoplasm. It is found in the cytosol. The protein localises to the endomembrane system. Functionally, plays a role in apoptosis. This Homo sapiens (Human) protein is Apoptosis facilitator Bcl-2-like protein 14 (BCL2L14).